Reading from the N-terminus, the 341-residue chain is HTH-type transcriptional repressor PurR (341 aa).

The HTH lacI-type domain occupies 2-56 (ATIKDVAKRANVSTTTVSHVINKTRFVAEETRNAVWTAIKELHYSPSAVARSLKV). The H-T-H motif DNA-binding region spans 4–23 (IKDVAKRANVSTTTVSHVIN). A DNA-binding region spans residues 48 to 56 (SAVARSLKV). Positions 73, 190, 192, 221, and 275 each coordinate hypoxanthine.

As to quaternary structure, homodimer.

Its pathway is purine metabolism; purine nucleotide biosynthesis [regulation]. Its function is as follows. Is the main repressor of the genes involved in the de novo synthesis of purine nucleotides, regulating purB, purC, purEK, purF, purHD, purL, purMN and guaBA expression. PurR is allosterically activated to bind its cognate DNA by binding the purine corepressors, hypoxanthine or guanine, thereby effecting transcription repression. In Salmonella paratyphi A (strain ATCC 9150 / SARB42), this protein is HTH-type transcriptional repressor PurR.